The sequence spans 692 residues: Elongation factor G (692 aa).

In terms of domain architecture, tr-type G spans 8-282 (EKTRNIGIMA…AIVDFLPAPT (275 aa)). GTP-binding positions include 17-24 (AHIDAGKT), 81-85 (DTPGH), and 135-138 (NKMD).

Belongs to the TRAFAC class translation factor GTPase superfamily. Classic translation factor GTPase family. EF-G/EF-2 subfamily.

Its subcellular location is the cytoplasm. In terms of biological role, catalyzes the GTP-dependent ribosomal translocation step during translation elongation. During this step, the ribosome changes from the pre-translocational (PRE) to the post-translocational (POST) state as the newly formed A-site-bound peptidyl-tRNA and P-site-bound deacylated tRNA move to the P and E sites, respectively. Catalyzes the coordinated movement of the two tRNA molecules, the mRNA and conformational changes in the ribosome. The chain is Elongation factor G from Moorella thermoacetica (strain ATCC 39073 / JCM 9320).